Consider the following 156-residue polypeptide: Myosin regulatory light chain, striated adductor muscle (156 aa).

Ala1 is modified (blocked amino end (Ala)). EF-hand domains are found at residues 15 to 50 (KQIQEMKEAFSMLDVDRDGFVNKDDLKAISEQLGRT) and 84 to 119 (DSEETIRNAFAMFDELETKKLNIEYIKDLLENMGDN). Residues Asp28, Asp30, Asp32, and Asp39 each contribute to the Ca(2+) site.

In terms of biological role, in molluscan muscle, calcium regulation is associated with myosin rather than with actin. Muscle myosin contains two types of light chains: the catalytic light chain, essential for ATPase activity, and the regulatory light chain, a calcium-binding protein responsible for Ca(2+) dependent binding and Ca(2+) dependent Mg-ATPase activity. The protein is Myosin regulatory light chain, striated adductor muscle of Chlamys nipponensis akazara (Akazara scallop).